The chain runs to 384 residues: 5-amino-6-(D-ribitylamino)uracil--L-tyrosine 4-hydroxyphenyl transferase 2 (384 aa).

Positions 53 to 286 (VSYVVNRNIY…IAISRVILHT (234 aa)) constitute a Radical SAM core domain. Positions 67, 71, and 74 each coordinate [4Fe-4S] cluster.

It belongs to the radical SAM superfamily. CofH family. In terms of assembly, consists of two subunits, CofG and CofH. [4Fe-4S] cluster serves as cofactor.

The catalysed reaction is 5-amino-6-(D-ribitylamino)uracil + L-tyrosine + S-adenosyl-L-methionine = 5-amino-5-(4-hydroxybenzyl)-6-(D-ribitylimino)-5,6-dihydrouracil + 2-iminoacetate + 5'-deoxyadenosine + L-methionine + H(+). It functions in the pathway cofactor biosynthesis; coenzyme F0 biosynthesis. In terms of biological role, catalyzes the radical-mediated synthesis of 5-amino-5-(4-hydroxybenzyl)-6-(D-ribitylimino)-5,6-dihydrouracil from 5-amino-6-(D-ribitylamino)uracil and L-tyrosine. This chain is 5-amino-6-(D-ribitylamino)uracil--L-tyrosine 4-hydroxyphenyl transferase 2, found in Methanosarcina barkeri (strain Fusaro / DSM 804).